The chain runs to 97 residues: YcgL domain-containing protein APP7_0754 (97 aa).

In terms of domain architecture, YcgL spans 6 to 90 (NLCAIYKSPK…PPENLLKTFL (85 aa)).

This is YcgL domain-containing protein APP7_0754 from Actinobacillus pleuropneumoniae serotype 7 (strain AP76).